The primary structure comprises 84 residues: Small ribosomal subunit protein uS17 (84 aa).

The protein belongs to the universal ribosomal protein uS17 family. Part of the 30S ribosomal subunit.

Its function is as follows. One of the primary rRNA binding proteins, it binds specifically to the 5'-end of 16S ribosomal RNA. The protein is Small ribosomal subunit protein uS17 of Clostridium acetobutylicum (strain ATCC 824 / DSM 792 / JCM 1419 / IAM 19013 / LMG 5710 / NBRC 13948 / NRRL B-527 / VKM B-1787 / 2291 / W).